Consider the following 367-residue polypeptide: Leucine-rich repeat-containing protein 28 (367 aa).

LRR repeat units lie at residues 16–36 (KHKN…ELLK), 42–63 (YLER…LAQK), 66–87 (NLVE…IGSL), 89–110 (KLQC…IGRL), 112–133 (ALRH…VGDL), 135–156 (ELQT…LHMC), 158–180 (SLQY…CQLP), 181–202 (SLNE…LGRS), and 204–226 (ELQY…LYNK).

This chain is Leucine-rich repeat-containing protein 28 (LRRC28), found in Homo sapiens (Human).